The primary structure comprises 204 residues: MEPKASCPAAAPLMERKFHVLVGVTGSVAALKLPLLVSKLLDIPGLEVAVVTTERAKHFYSPQDIPVTLYSDADEWEIWKSRSDPVLHIDLRRWADLLLVAPLDANTLGKVASGICDNLLTCVMRAWDRSKPLLFCPAMNTAMWEHPITAQQVDQLKAFGYVEIPCVAKKLVCGDEGLGAMAEVGTIVDKVKEVLFQHSGFQQS.

Residues phenylalanine 59 and 104–107 (DANT) contribute to the FMN site. Asparagine 140 lines the substrate pocket. The active-site Proton donor is cysteine 173.

Belongs to the HFCD (homooligomeric flavin containing Cys decarboxylase) superfamily. As to quaternary structure, homotrimer. Requires FMN as cofactor.

It catalyses the reaction N-[(R)-4-phosphopantothenoyl]-L-cysteine + H(+) = (R)-4'-phosphopantetheine + CO2. The protein operates within cofactor biosynthesis; coenzyme A biosynthesis; CoA from (R)-pantothenate: step 3/5. Its function is as follows. Catalyzes the decarboxylation of the cysteine moiety of 4-phosphopantothenoylcysteine to form 4'-phosphopantotheine and this reaction forms part of the biosynthesis of coenzyme A. The protein is Phosphopantothenoylcysteine decarboxylase (PPCDC) of Homo sapiens (Human).